We begin with the raw amino-acid sequence, 201 residues long: Holliday junction branch migration complex subunit RuvA (201 aa).

Positions 1-61 are domain I; it reads MIEFVKGTID…EDAFSLYGFS (61 aa). Residues 62–140 form a domain II region; the sequence is TREEKALFTK…DVVPEMIDNL (79 aa). The segment at 141-150 is flexible linker; it reads FNHEARIEKQ. The domain III stretch occupies residues 151-201; that stretch reads EAETALDEALEALRVLGYAEKEIKKVLPHLKEETALSTDQYVKKALQKLLK.

It belongs to the RuvA family. As to quaternary structure, homotetramer. Forms an RuvA(8)-RuvB(12)-Holliday junction (HJ) complex. HJ DNA is sandwiched between 2 RuvA tetramers; dsDNA enters through RuvA and exits via RuvB. An RuvB hexamer assembles on each DNA strand where it exits the tetramer. Each RuvB hexamer is contacted by two RuvA subunits (via domain III) on 2 adjacent RuvB subunits; this complex drives branch migration. In the full resolvosome a probable DNA-RuvA(4)-RuvB(12)-RuvC(2) complex forms which resolves the HJ.

It is found in the cytoplasm. The RuvA-RuvB-RuvC complex processes Holliday junction (HJ) DNA during genetic recombination and DNA repair, while the RuvA-RuvB complex plays an important role in the rescue of blocked DNA replication forks via replication fork reversal (RFR). RuvA specifically binds to HJ cruciform DNA, conferring on it an open structure. The RuvB hexamer acts as an ATP-dependent pump, pulling dsDNA into and through the RuvAB complex. HJ branch migration allows RuvC to scan DNA until it finds its consensus sequence, where it cleaves and resolves the cruciform DNA. In Bacillus velezensis (strain DSM 23117 / BGSC 10A6 / LMG 26770 / FZB42) (Bacillus amyloliquefaciens subsp. plantarum), this protein is Holliday junction branch migration complex subunit RuvA.